The following is a 468-amino-acid chain: H(+)/Cl(-) exchange transporter ClcA (468 aa).

Residues 1-30 (MSTRETFKISLLAKMPKDVINQFLSKDKTP) are Cytoplasmic-facing. Residues 31–67 (FSVLFLSLLVGILAGLVGTYFEQAVHLVSETRTDWLK) form a helical membrane-spanning segment. At 68–74 (SEIGSFL) the chain is on the periplasmic side. The chain crosses the membrane as a helical span at residues 75–98 (PLWLAAFLISAFLAFIGYFLVHRF). Positions 104 to 108 (GSGIP) match the Selectivity filter part_1 motif. S105 lines the chloride pocket. The segment at residues 107–114 (IPEIEGAM) is an intramembrane region (helical). The Cytoplasmic segment spans residues 115 to 121 (DGMRPVR). 2 helical membrane passes run 122 to 139 (WWRV…ALGS) and 146 to 164 (EGPT…SDIF). The Selectivity filter part_2 signature appears at 144–148 (GREGP). At 165 to 174 (RVKNEDTRHS) the chain is on the cytoplasmic side. 2 intramembrane regions (helical) span residues 175-187 (LLAA…LAAA) and 191-199 (PLAGIMFVI). Residues 200–212 (EEMRPQFRYTLIS) are Cytoplasmic-facing. The chain crosses the membrane as a helical span at residues 213 to 230 (VRAVIISAVAANIVFRVI). Topologically, residues 231–250 (NGQDAVITMPQYDAPELSTL) are periplasmic. A helical membrane pass occupies residues 251–279 (GLFLLLGALFGVFGVLFNYLITLAQDLFV). At 280-285 (KFHRND) the chain is on the cytoplasmic side. Residues 286-307 (RKRYLLTGSMIGGCFGLLLLYV) traverse the membrane as a helical segment. Residues 308 to 327 (PELTGGGISLIPTITNGGYG) are Periplasmic-facing. 2 consecutive transmembrane segments (helical) span residues 328 to 347 (AGIL…LCFG) and 353 to 374 (GIFA…LIAK). Residues 353–357 (GIFAP) carry the Selectivity filter part_3 motif. I354 and F355 together coordinate chloride. Residues 375–384 (VWFPELNIEP) lie on the Periplasmic side of the membrane. An intramembrane region (helical) is located at residues 385 to 399 (GMFAIAGMGALFAAT). The note=Loop between two helices intramembrane region spans 400 to 402 (VRA). Residues 403–414 (PITGILLVIEMT) constitute an intramembrane region (helical). Positions 415 to 419 (NNYHL) form an intramembrane region, note=Loop between two helices. Residues 420 to 436 (ILPLIITSLGAVIFAQL) traverse the membrane as a helical segment. Residues 437 to 468 (LGGQPIYSQLLHRTLKNQKLQQQDLPPQSPNS) are Cytoplasmic-facing. Y443 is a binding site for chloride.

The protein belongs to the chloride channel (TC 2.A.49) family. ClcA subfamily. Homodimer.

The protein resides in the cell inner membrane. The catalysed reaction is 2 chloride(in) + H(+)(out) = 2 chloride(out) + H(+)(in). Proton-coupled chloride transporter. Functions as antiport system and exchanges two chloride ions for 1 proton. Probably acts as an electrical shunt for an outwardly-directed proton pump that is linked to amino acid decarboxylation, as part of the extreme acid resistance (XAR) response. This chain is H(+)/Cl(-) exchange transporter ClcA, found in Vibrio cholerae serotype O1 (strain ATCC 39541 / Classical Ogawa 395 / O395).